A 497-amino-acid chain; its full sequence is Protein nucleotidyltransferase YdiU (497 aa).

ATP-binding residues include glycine 92, glycine 94, arginine 95, lysine 114, aspartate 126, glycine 127, arginine 177, and arginine 184. The Proton acceptor role is filled by aspartate 261. 2 residues coordinate Mg(2+): asparagine 262 and aspartate 271. Aspartate 271 provides a ligand contact to ATP.

Belongs to the SELO family. Mg(2+) is required as a cofactor. The cofactor is Mn(2+).

It carries out the reaction L-seryl-[protein] + ATP = 3-O-(5'-adenylyl)-L-seryl-[protein] + diphosphate. The catalysed reaction is L-threonyl-[protein] + ATP = 3-O-(5'-adenylyl)-L-threonyl-[protein] + diphosphate. The enzyme catalyses L-tyrosyl-[protein] + ATP = O-(5'-adenylyl)-L-tyrosyl-[protein] + diphosphate. It catalyses the reaction L-histidyl-[protein] + UTP = N(tele)-(5'-uridylyl)-L-histidyl-[protein] + diphosphate. It carries out the reaction L-seryl-[protein] + UTP = O-(5'-uridylyl)-L-seryl-[protein] + diphosphate. The catalysed reaction is L-tyrosyl-[protein] + UTP = O-(5'-uridylyl)-L-tyrosyl-[protein] + diphosphate. Functionally, nucleotidyltransferase involved in the post-translational modification of proteins. It can catalyze the addition of adenosine monophosphate (AMP) or uridine monophosphate (UMP) to a protein, resulting in modifications known as AMPylation and UMPylation. The polypeptide is Protein nucleotidyltransferase YdiU (Bordetella petrii (strain ATCC BAA-461 / DSM 12804 / CCUG 43448)).